A 426-amino-acid chain; its full sequence is Glutamyl-tRNA reductase (426 aa).

Substrate contacts are provided by residues 49-52 (TCNR), S101, 106-108 (EPQ), and Q112. C50 functions as the Nucleophile in the catalytic mechanism. 181–186 (GAGETI) lines the NADP(+) pocket. The segment at 404–426 (DRLFPEKPGLPTSPHSYPDREDR) is disordered.

It belongs to the glutamyl-tRNA reductase family. Homodimer.

It catalyses the reaction (S)-4-amino-5-oxopentanoate + tRNA(Glu) + NADP(+) = L-glutamyl-tRNA(Glu) + NADPH + H(+). Its pathway is porphyrin-containing compound metabolism; protoporphyrin-IX biosynthesis; 5-aminolevulinate from L-glutamyl-tRNA(Glu): step 1/2. In terms of biological role, catalyzes the NADPH-dependent reduction of glutamyl-tRNA(Glu) to glutamate 1-semialdehyde (GSA). The protein is Glutamyl-tRNA reductase of Xanthomonas campestris pv. phaseoli.